The sequence spans 660 residues: Translation factor GUF1, mitochondrial (660 aa).

A mitochondrion-targeting transit peptide spans 1 to 42 (MRSCVRTASSVLQSWRAHTVLRNGCPLPSRTLERLPRLARSY). The tr-type G domain maps to 62–242 (ERYRNFCIVA…AVVEKIPAPV (181 aa)). GTP contacts are provided by residues 71–78 (AHVDHGKS), 135–139 (DTPGH), and 189–192 (NKVD).

It belongs to the TRAFAC class translation factor GTPase superfamily. Classic translation factor GTPase family. LepA subfamily.

It is found in the mitochondrion inner membrane. The catalysed reaction is GTP + H2O = GDP + phosphate + H(+). Its function is as follows. Promotes mitochondrial protein synthesis. May act as a fidelity factor of the translation reaction, by catalyzing a one-codon backward translocation of tRNAs on improperly translocated ribosomes. Binds to mitochondrial ribosomes in a GTP-dependent manner. The polypeptide is Translation factor GUF1, mitochondrial (Phaeosphaeria nodorum (strain SN15 / ATCC MYA-4574 / FGSC 10173) (Glume blotch fungus)).